The chain runs to 448 residues: NK1 transcription factor-related protein 1 (448 aa).

The segment covering 1-13 has biased composition (low complexity); the sequence is MSASGPEAPGDIP. Disordered regions lie at residues 1-80, 115-299, and 350-397; these read MSAS…LRPT, ASAP…PRRA, and KWKK…GAPL. Residues 14 to 30 are compositionally biased toward pro residues; sequence ALPPPPQPGSGPAPPAP. Composition is skewed to low complexity over residues 62-79 and 115-129; these read PAAPEGAGAARPAAPLRP and ASAPCAPAPAASGRP. Residues 130–139 are compositionally biased toward basic and acidic residues; sequence PRAEELERRA. Positions 186–203 are enriched in acidic residues; that stretch reads SGDEVPDDEDDDEDEAPE. The span at 205-214 shows a compositional bias: basic and acidic residues; that stretch reads EAARGAEEAR. Composition is skewed to gly residues over residues 215–227 and 259–270; these read GGGGGLGARGSGC and PPGGAAAPGGAG. A compositionally biased stretch (low complexity) spans 271–280; the sequence is TTPQGTATAA. The homeobox DNA-binding region spans 296 to 355; it reads PRRARTAFTYEQLVALENKFKATRYLSVCERLNLALSLSLTETQVKIWFQNRRTKWKKQN. A compositionally biased stretch (gly residues) spans 364-382; it reads TGGGGGPGPGAGPGTGLPG.

The protein belongs to the NK-1 homeobox family. As to expression, expressed in hemopoietic progenitor cells.

It localises to the nucleus. Its function is as follows. May be required for the coordinated crosstalk of factors involved in the maintenance of energy homeostasis, possibly by regulating the transcription of specific factors involved in energy balance. This is NK1 transcription factor-related protein 1 from Homo sapiens (Human).